We begin with the raw amino-acid sequence, 481 residues long: Probable glycine dehydrogenase (decarboxylating) subunit 2 (481 aa).

The disordered stretch occupies residues 1 to 23 (MVIFEKTRGKNSPSVMPSKKGDV). Lys263 carries the post-translational modification N6-(pyridoxal phosphate)lysine.

Belongs to the GcvP family. C-terminal subunit subfamily. The glycine cleavage system is composed of four proteins: P, T, L and H. In this organism, the P 'protein' is a heterodimer of two subunits. Pyridoxal 5'-phosphate is required as a cofactor.

It catalyses the reaction N(6)-[(R)-lipoyl]-L-lysyl-[glycine-cleavage complex H protein] + glycine + H(+) = N(6)-[(R)-S(8)-aminomethyldihydrolipoyl]-L-lysyl-[glycine-cleavage complex H protein] + CO2. Its function is as follows. The glycine cleavage system catalyzes the degradation of glycine. The P protein binds the alpha-amino group of glycine through its pyridoxal phosphate cofactor; CO(2) is released and the remaining methylamine moiety is then transferred to the lipoamide cofactor of the H protein. The protein is Probable glycine dehydrogenase (decarboxylating) subunit 2 of Francisella philomiragia subsp. philomiragia (strain ATCC 25017 / CCUG 19701 / FSC 153 / O#319-036).